Here is an 85-residue protein sequence, read N- to C-terminus: Small ribosomal subunit protein bS16 (85 aa).

The protein belongs to the bacterial ribosomal protein bS16 family.

The chain is Small ribosomal subunit protein bS16 from Pseudomonas syringae pv. tomato (strain ATCC BAA-871 / DC3000).